Here is a 307-residue protein sequence, read N- to C-terminus: Putative ankyrin repeat protein R229 (307 aa).

ANK repeat units lie at residues 135 to 164, 165 to 194, 196 to 224, 226 to 254, 256 to 284, and 286 to 307; these read ASRVILGNRLNLRDISTFKYLMSLGVDINV, DNDKPLRWAASRGYYGLVKFLLDNGANVHA, DDEAVQLASRNGYLNVVKILVEYGANVNA, NDYAIQMACKYGYNEIVRFLVFNGANPMA, RYYPIEIATEFGNKLIVRFLLHQDKSMVY, and SYAMDIAVRNENWDLLNVLLLD.

The chain is Putative ankyrin repeat protein R229 from Acanthamoeba polyphaga (Amoeba).